The following is a 67-amino-acid chain: MDWNRVEGNWKQMKGKVKEQWGKLTDDDLDVINGKREQLEGKIQERYGYEKDRTKKDIDDWYGRQGW.

The protein belongs to the UPF0337 (CsbD) family.

This Agrobacterium fabrum (strain C58 / ATCC 33970) (Agrobacterium tumefaciens (strain C58)) protein is UPF0337 protein Atu4724.